A 446-amino-acid chain; its full sequence is Tubulin beta-6 chain (446 aa).

Residues 1–4 (MREI) carry the MREI motif motif. Residues Gln11, Glu69, Ser138, Gly142, Thr143, and Gly144 each coordinate GTP. Glu69 is a binding site for Mg(2+). Ser172 is subject to Phosphoserine; by CDK1. Residues Asn204 and Asn226 each contribute to the GTP site. The residue at position 438 (Glu438) is a 5-glutamyl polyglutamate.

The protein belongs to the tubulin family. As to quaternary structure, dimer of alpha and beta chains. A typical microtubule is a hollow water-filled tube with an outer diameter of 25 nm and an inner diameter of 15 nM. Alpha-beta heterodimers associate head-to-tail to form protofilaments running lengthwise along the microtubule wall with the beta-tubulin subunit facing the microtubule plus end conferring a structural polarity. Microtubules usually have 13 protofilaments but different protofilament numbers can be found in some organisms and specialized cells. It depends on Mg(2+) as a cofactor. Some glutamate residues at the C-terminus are polyglycylated, resulting in polyglycine chains on the gamma-carboxyl group. Glycylation is mainly limited to tubulin incorporated into axonemes (cilia and flagella) whereas glutamylation is prevalent in neuronal cells, centrioles, axonemes, and the mitotic spindle. Both modifications can coexist on the same protein on adjacent residues, and lowering polyglycylation levels increases polyglutamylation, and reciprocally. Cilia and flagella glycylation is required for their stability and maintenance. Flagella glycylation controls sperm motility. Post-translationally, some glutamate residues at the C-terminus are polyglutamylated, resulting in polyglutamate chains on the gamma-carboxyl group. Polyglutamylation plays a key role in microtubule severing by spastin (SPAST). SPAST preferentially recognizes and acts on microtubules decorated with short polyglutamate tails: severing activity by SPAST increases as the number of glutamates per tubulin rises from one to eight, but decreases beyond this glutamylation threshold. Glutamylation is also involved in cilia motility. In terms of processing, phosphorylated on Ser-172 by CDK1 during the cell cycle, from metaphase to telophase, but not in interphase. This phosphorylation inhibits tubulin incorporation into microtubules.

It is found in the cytoplasm. Its subcellular location is the cytoskeleton. Tubulin is the major constituent of microtubules, a cylinder consisting of laterally associated linear protofilaments composed of alpha- and beta-tubulin heterodimers. Microtubules grow by the addition of GTP-tubulin dimers to the microtubule end, where a stabilizing cap forms. Below the cap, tubulin dimers are in GDP-bound state, owing to GTPase activity of alpha-tubulin. In Bos taurus (Bovine), this protein is Tubulin beta-6 chain (TUBB6).